A 538-amino-acid chain; its full sequence is AAA ATPase forming ring-shaped complexes (538 aa).

Residues 14–54 (ARELRLANHRLGAQNEKLTEALKASREKLAEINSRLADMAE) adopt a coiled-coil conformation. 240 to 245 (GNGKTL) is a binding site for ATP.

The protein belongs to the AAA ATPase family. In terms of assembly, homohexamer. Assembles into a hexameric ring structure.

The chain is AAA ATPase forming ring-shaped complexes from Corynebacterium urealyticum (strain ATCC 43042 / DSM 7109).